Here is an 85-residue protein sequence, read N- to C-terminus: Cytochrome c6 (85 aa).

Heme c contacts are provided by cysteine 14, cysteine 17, histidine 18, and methionine 58.

The protein belongs to the cytochrome c family. PetJ subfamily. In terms of assembly, monomer. In terms of processing, binds 1 heme c group covalently per subunit.

It localises to the cellular thylakoid lumen. In terms of biological role, functions as an electron carrier between membrane-bound cytochrome b6-f and photosystem I in oxygenic photosynthesis. In Leptolyngbya boryana (Plectonema boryanum), this protein is Cytochrome c6 (petJ).